The chain runs to 502 residues: Probable cobyric acid synthase (502 aa).

In terms of domain architecture, GATase cobBQ-type spans 250–448; sequence KITIGTLRLP…FHGIFHNFEF (199 aa). Cysteine 330 acts as the Nucleophile in catalysis. Histidine 440 is an active-site residue.

This sequence belongs to the CobB/CobQ family. CobQ subfamily.

It functions in the pathway cofactor biosynthesis; adenosylcobalamin biosynthesis. Its function is as follows. Catalyzes amidations at positions B, D, E, and G on adenosylcobyrinic A,C-diamide. NH(2) groups are provided by glutamine, and one molecule of ATP is hydrogenolyzed for each amidation. The chain is Probable cobyric acid synthase from Methanosphaera stadtmanae (strain ATCC 43021 / DSM 3091 / JCM 11832 / MCB-3).